Here is a 303-residue protein sequence, read N- to C-terminus: Methionine import ATP-binding protein MetN (303 aa).

Residues 1-222 (MLDQISLEIP…PDPKMRHFLG (222 aa)) enclose the ABC transporter domain. Residue 19–26 (GHSGAGKS) participates in ATP binding.

The protein belongs to the ABC transporter superfamily. Methionine importer (TC 3.A.1.24) family. The complex is composed of two ATP-binding proteins (MetN), two transmembrane proteins (MetI) and a solute-binding protein (MetQ).

The protein localises to the cell inner membrane. It carries out the reaction L-methionine(out) + ATP + H2O = L-methionine(in) + ADP + phosphate + H(+). It catalyses the reaction D-methionine(out) + ATP + H2O = D-methionine(in) + ADP + phosphate + H(+). In terms of biological role, part of the ABC transporter complex MetNIQ involved in methionine import. Responsible for energy coupling to the transport system. This is Methionine import ATP-binding protein MetN from Wolinella succinogenes (strain ATCC 29543 / DSM 1740 / CCUG 13145 / JCM 31913 / LMG 7466 / NCTC 11488 / FDC 602W) (Vibrio succinogenes).